Reading from the N-terminus, the 280-residue chain is Monoacylglycerol lipase (280 aa).

Catalysis depends on Ser111, which acts as the Nucleophile. Catalysis depends on charge relay system residues Asp227 and His257.

The protein belongs to the AB hydrolase superfamily.

Its subcellular location is the secreted. It localises to the cell wall. It carries out the reaction Hydrolyzes glycerol monoesters of long-chain fatty acids.. In terms of biological role, contributes to cell growth, probably by hydrolyzing exogenous lipids. Catalyzes the hydrolysis of monoacylglycerols (MAG) with fatty acid chains ranging from C14 to C18, with a maximum activity on monoolein. Is unable to hydrolyze long-chain diacylglycerol (DAG). The sequence is that of Monoacylglycerol lipase from Mycolicibacterium smegmatis (strain ATCC 700084 / mc(2)155) (Mycobacterium smegmatis).